We begin with the raw amino-acid sequence, 255 residues long: F-box/SPRY domain-containing protein 1 (255 aa).

The 49-residue stretch at 3-51 folds into the F-box domain; sequence DPVAALCNYNVLEVIFSYLELDDLSHCSQVCKSWYHFLNDENSDVWRWH. Residues 61–253 form the B30.2/SPRY domain; that stretch reads LKSDLLASVS…VSMVYLGTPL (193 aa).

Belongs to the FBXO45/Fsn family. In terms of assembly, component of an E3 ubiquitin ligase complex composed of hiw and Fsn. Interacts with Rae1, probably as part of the hiw-Fsn complex. Interacts (via B30.2/SPRY domain) with vas. Interacts with Cul1. As to expression, expressed in nurse cells and oocytes (at protein level). Expressed in the brain. Expressed in the neuromuscular junction (NMJ).

Its subcellular location is the cytoplasm. It is found in the nucleus. The protein localises to the synapse. It localises to the cell projection. The protein resides in the axon. Its subcellular location is the perikaryon. Its pathway is protein modification; protein ubiquitination. Its function is as follows. Required in the presynaptic motoneuron to down-regulate the levels of wnd and restrain synaptic terminal growth at the neuromuscular junction (NMJ). Negatively regulates the localization of vas to the posterior pole of the oocyte. Involved in primordial germ cell formation. In Drosophila melanogaster (Fruit fly), this protein is F-box/SPRY domain-containing protein 1 (Fsn).